The chain runs to 597 residues: MFS-type transporter FPY5 (597 aa).

Residues 1-55 (MSETTGLPLKHLQGSPPGTPVNTNNESNEASPDDGCRLPDTVTEAEASSDNHGSV) are disordered. Polar residues-rich tracts occupy residues 20-30 (PVNTNNESNEA) and 46-55 (EASSDNHGSV). A glycan (N-linked (GlcNAc...) asparagine) is linked at asparagine 25. An N-linked (GlcNAc...) asparagine glycan is attached at asparagine 72. The next 9 helical transmembrane spans lie at 94–114 (LSLL…VSIV), 120–140 (FNMA…FLII), 147–167 (IFGC…FSMA), 183–203 (FQGM…PLMV), 214–234 (IMSS…GAIT), 241–261 (WVFY…AFSV), 286–306 (VDFV…FALE), 316–336 (SGAI…FIAW), and 360–380 (FVMG…AALI). N-linked (GlcNAc...) asparagine glycosylation occurs at asparagine 390. The next 5 membrane-spanning stretches (helical) occupy residues 402–422 (LPLL…VSKL), 424–444 (VPPL…VGLY), 463–483 (IMGL…PLVV), 498–518 (IRVL…INHI), and 562–582 (EQMR…VLLV).

Belongs to the major facilitator superfamily. TCR/Tet family.

It localises to the membrane. Its pathway is secondary metabolite biosynthesis. In terms of biological role, MFS-type transporter; part of the gene cluster that mediates the biosynthesis of the gamma-pyrones fusapyrone (FPY) and deoxyfusapyrone (dFPY). The chain is MFS-type transporter FPY5 from Fusarium mangiferae (Mango malformation disease fungus).